The primary structure comprises 320 residues: Methionyl-tRNA formyltransferase (320 aa).

(6S)-5,6,7,8-tetrahydrofolate is bound at residue 112–115 (SILP).

It belongs to the Fmt family.

The catalysed reaction is L-methionyl-tRNA(fMet) + (6R)-10-formyltetrahydrofolate = N-formyl-L-methionyl-tRNA(fMet) + (6S)-5,6,7,8-tetrahydrofolate + H(+). In terms of biological role, attaches a formyl group to the free amino group of methionyl-tRNA(fMet). The formyl group appears to play a dual role in the initiator identity of N-formylmethionyl-tRNA by promoting its recognition by IF2 and preventing the misappropriation of this tRNA by the elongation apparatus. This is Methionyl-tRNA formyltransferase from Shewanella woodyi (strain ATCC 51908 / MS32).